A 358-amino-acid chain; its full sequence is Photosystem II protein D1 (358 aa).

3 helical membrane passes run 28-45, 117-132, and 141-155; these read YVGW…AAAI, HFLI…QWEL, and WICV…AAFA. Chlorophyll a is bound at residue His117. Trp125 contacts pheophytin a. Positions 169 and 188 each coordinate [CaMn4O5] cluster. A helical transmembrane segment spans residues 196 to 217; sequence FHMIGVAGMFGGSLFSAMHGSL. His197 is a chlorophyll a binding site. A quinone contacts are provided by residues His214 and 263-264; that span reads SF. His214 lines the Fe cation pocket. Position 271 (His271) interacts with Fe cation. A helical transmembrane segment spans residues 273–287; it reads FLAAWPVICIWITSL. [CaMn4O5] cluster is bound by residues His331, Glu332, Asp341, and Ala343. Positions 344–358 are excised as a propeptide; sequence AAESTPVALIAPAIG.

It belongs to the reaction center PufL/M/PsbA/D family. In terms of assembly, PSII is composed of 1 copy each of membrane proteins PsbA, PsbB, PsbC, PsbD, PsbE, PsbF, PsbH, PsbI, PsbJ, PsbK, PsbL, PsbM, PsbT, PsbX, PsbY, Psb30/Ycf12, peripheral proteins PsbO, CyanoQ (PsbQ), PsbU, PsbV and a large number of cofactors. It forms dimeric complexes. The D1/D2 heterodimer binds P680, chlorophylls that are the primary electron donor of PSII, and subsequent electron acceptors. It shares a non-heme iron and each subunit binds pheophytin, quinone, additional chlorophylls, carotenoids and lipids. D1 provides most of the ligands for the Mn4-Ca-O5 cluster of the oxygen-evolving complex (OEC). There is also a Cl(-1) ion associated with D1 and D2, which is required for oxygen evolution. The PSII complex binds additional chlorophylls, carotenoids and specific lipids. serves as cofactor. Tyr-160 forms a radical intermediate that is referred to as redox-active TyrZ, YZ or Y-Z. Post-translationally, C-terminally processed by CtpA; processing is essential to allow assembly of the oxygen-evolving complex and thus photosynthetic growth.

The protein localises to the cellular thylakoid membrane. The catalysed reaction is 2 a plastoquinone + 4 hnu + 2 H2O = 2 a plastoquinol + O2. Its function is as follows. Photosystem II (PSII) is a light-driven water:plastoquinone oxidoreductase that uses light energy to abstract electrons from H(2)O, generating O(2) and a proton gradient subsequently used for ATP formation. It consists of a core antenna complex that captures photons, and an electron transfer chain that converts photonic excitation into a charge separation. The D1/D2 (PsbA/PsbD) reaction center heterodimer binds P680, the primary electron donor of PSII as well as several subsequent electron acceptors. This Prochlorococcus marinus (strain MIT 9313) protein is Photosystem II protein D1.